We begin with the raw amino-acid sequence, 190 residues long: FLIGIWAAPKSEDNVPLGSPATSDLSDTSCAKTHEALKTSRNIDQHYPAPKKAEDQEFGSAANIIVDPKLFQKRRFQSPRVLFSTQPPPLSRDEQNVDNANSLNRNIRAKREDHPVHNRGEYSVCDSVNVWVANKTTATDIRGNVVTVMVDVNINNNVYKQYFFETKCRNPNPVPTGCRGIDARHWNSYC.

The N-terminal stretch at 1–7 is a signal peptide; the sequence is FLIGIWA. Positions 8–111 are excised as a propeptide; it reads APKSEDNVPL…SLNRNIRAKR (104 aa). An intrachain disulfide couples C125 to C190. An N-linked (GlcNAc...) asparagine glycan is attached at N134.

The protein belongs to the NGF-beta family. As to quaternary structure, homodimer; non-covalently linked. Post-translationally, glycosylated. As to expression, expressed by the venom gland.

It localises to the secreted. Nerve growth factor is important for the development and maintenance of the sympathetic and sensory nervous systems. It stimulates division and differentiation of sympathetic and embryonic sensory neurons as well as basal forebrain cholinergic neurons in the brain. Its relevance in the snake venom is not clear. However, it has been shown to inhibit metalloproteinase-dependent proteolysis of platelet glycoprotein Ib alpha, suggesting a metalloproteinase inhibition to prevent metalloprotease autodigestion and/or protection against prey proteases. Binds a lipid between the two protein chains in the homodimer. The lipid-bound form promotes histamine relase from mouse mast cells, contrary to the lipid-free form. This chain is Venom nerve growth factor, found in Agkistrodon contortrix contortrix (Southern copperhead).